The sequence spans 1765 residues: Sodium channel protein type 11 subunit alpha (1765 aa).

Residues 1–126 are Cytoplasmic-facing; the sequence is MEERYYPVIF…PLRSLMIRIS (126 aa). The stretch at 115–403 is one I repeat; it reads FNPLRSLMIR…VTMAYEEQNR (289 aa). The helical transmembrane segment at 127–148 threads the bilayer; sequence VHSVFSMFIICTVIINCMFMAN. The Extracellular segment spans residues 149 to 157; sequence SMERSFDND. Residues 158–177 form a helical membrane-spanning segment; sequence IPEYVFIGIYILEAVIKILA. The Cytoplasmic segment spans residues 178–189; sequence RGFIVDEFSFLR. Residues 190–209 traverse the membrane as a helical segment; it reads DPWNWLDFIVIGTAIATCFP. Residues 210-216 lie on the Extracellular side of the membrane; it reads GSQVNLS. A glycan (N-linked (GlcNAc...) asparagine) is linked at Asn-214. The chain crosses the membrane as a helical; Voltage-sensor span at residues 217–236; the sequence is ALRTFRVFRALKAISVISGL. Topologically, residues 237 to 252 are cytoplasmic; the sequence is KVIVGALLRSVKKLVD. The helical transmembrane segment at 253–266 threads the bilayer; it reads VMVLTLFCLSIFAL. Residues 267–339 are Extracellular-facing; that stretch reads VGQQLFMGIL…PDNNYTKFDN (73 aa). Residues Cys-280 and Cys-317 are joined by a disulfide bond. 2 N-linked (GlcNAc...) asparagine glycosylation sites follow: Asn-319 and Asn-333. Positions 340–364 form an intramembrane region, pore-forming; that stretch reads FGWSFLAMFRVMTQDSWERLYRQIL. At 365-371 the chain is on the extracellular side; the sequence is RTSGIYF. A helical membrane pass occupies residues 372 to 397; sequence VFFFVVVIFLGSFYLLNLTLAVVTMA. Residues 398 to 567 are Cytoplasmic-facing; the sequence is YEEQNRNVAA…WLCIKKVLRT (170 aa). Residues 554 to 820 form an II repeat; sequence CSPQWLCIKK…EGETRKTKVQ (267 aa). The helical transmembrane segment at 568–591 threads the bilayer; that stretch reads IMTDPFTELAITICIIINTVFLAV. Residues 592–602 are Extracellular-facing; the sequence is EHHNMDDNLKT. The chain crosses the membrane as a helical span at residues 603 to 626; the sequence is ILKIGNWVFTGIFIAEMCLKIIAL. Topologically, residues 627–634 are cytoplasmic; it reads DPYHYFRH. The helical transmembrane segment at 635 to 656 threads the bilayer; sequence GWNVFDSIVALLSLADVLYNTL. The Extracellular portion of the chain corresponds to 657–662; the sequence is SDNNRS. N-linked (GlcNAc...) asparagine glycosylation occurs at Asn-660. The helical; Voltage-sensor transmembrane segment at 663-682 threads the bilayer; that stretch reads FLASLRVLRVFKLAKSWPTL. Over 683-697 the chain is Cytoplasmic; sequence NTLIKIIGHSVGALG. The helical transmembrane segment at 698-720 threads the bilayer; the sequence is NLTVVLTIVVFIFSVVGMRLFGT. Residues 721–741 lie on the Extracellular side of the membrane; it reads KFNKTAYATQERPRRRWHMDN. Residue Asn-723 is glycosylated (N-linked (GlcNAc...) asparagine). The segment at residues 742–762 is an intramembrane region (pore-forming); the sequence is FYHSFLVVFRILCGEWIENMW. Residues 763-772 are Extracellular-facing; sequence GCMQDMDGSP. Cysteines 764 and 774 form a disulfide. Residues 773–798 traverse the membrane as a helical segment; that stretch reads LCIIVFVLIMVIGKLVVLNLFIALLL. Topologically, residues 799 to 1029 are cytoplasmic; the sequence is NSFSNEEKDG…WWNIRKTCYQ (231 aa). An III repeat occupies 1022–1319; it reads NIRKTCYQIV…KKYYNAMKKL (298 aa). A helical transmembrane segment spans residues 1030–1052; that stretch reads IVKHSWFESFIIFVILLSSGALI. Residues 1053 to 1066 are Extracellular-facing; the sequence is FEDVNLPSRPQVEK. The chain crosses the membrane as a helical span at residues 1067–1092; sequence LLRCTDNIFTFIFLLEMILKWVAFGF. Residues 1093-1098 lie on the Cytoplasmic side of the membrane; that stretch reads RRYFTS. A helical transmembrane segment spans residues 1099-1116; sequence AWCWLDFLIVVVSVLSLM. Position 1117 (Asn-1117) is a topological domain, extracellular. A helical; Voltage-sensor membrane pass occupies residues 1118–1139; it reads LPSLKSFRTLRALRPLRALSQF. At 1140–1158 the chain is on the cytoplasmic side; sequence EGMKVVVYALISAIPAILN. Residues 1159–1180 form a helical membrane-spanning segment; that stretch reads VLLVCLIFWLVFCILGVNLFSG. Topologically, residues 1181 to 1223 are extracellular; that stretch reads KFGRCINGTDINMYLDFTEVPNRSQCNISNYSWKVPQVNFDNV. Asn-1187, Asn-1202, Asn-1207, and Asn-1210 each carry an N-linked (GlcNAc...) asparagine glycan. An intramembrane region (pore-forming) is located at residues 1224–1245; it reads GNAYLALLQVATYKGWLEIMNA. Residues 1246–1261 lie on the Extracellular side of the membrane; it reads AVDSREKDEQPDFEAN. A helical membrane pass occupies residues 1262–1288; sequence LYAYLYFVVFIIFGSFFTLNLFIGVII. Over 1289–1341 the chain is Cytoplasmic; the sequence is DNFNQQQKKLGGQDIFMTEEQKKYYNAMKKLGTKKPQKPIPRPLNKCQAFVFD. One copy of the IV repeat lies at 1328-1619; it reads IPRPLNKCQA…WEKFDPEASQ (292 aa). Residues 1342–1365 form a helical membrane-spanning segment; sequence LVTSQVFDVIILGLIVLNMIIMMA. The Extracellular portion of the chain corresponds to 1366-1376; sequence ESADQPKDVKK. Residues 1377 to 1400 form a helical membrane-spanning segment; it reads TFDILNIAFVVIFTIECLIKVFAL. At 1401–1406 the chain is on the cytoplasmic side; the sequence is RQHYFT. The helical transmembrane segment at 1407–1430 threads the bilayer; that stretch reads NGWNLFDCVVVVLSIISTLVSRLE. The Extracellular segment spans residues 1431–1440; the sequence is DSDISFPPTL. Residues 1441-1463 traverse the membrane as a helical; Voltage-sensor segment; the sequence is FRVVRLARIGRILRLVRAARGIR. Topologically, residues 1464-1478 are cytoplasmic; it reads TLLFALMMSLPSLFN. Residues 1479 to 1501 traverse the membrane as a helical segment; the sequence is IGLLLFLVMFIYAIFGMSWFSKV. Topologically, residues 1502–1515 are extracellular; sequence KKGSGIDDIFNFET. The segment at residues 1516–1538 is an intramembrane region (pore-forming); that stretch reads FTGSMLCLFQITTSAGWDTLLNP. Over 1539–1559 the chain is Extracellular; that stretch reads MLEAKEHCNSSSQDSCQQPQI. Residue Asn-1547 is glycosylated (N-linked (GlcNAc...) asparagine). A helical transmembrane segment spans residues 1560–1584; the sequence is AVVYFVSYIIISFLIVVNMYIAVIL. Topologically, residues 1585-1765 are cytoplasmic; sequence ENFNTATEES…DVAKVKVHND (181 aa).

Belongs to the sodium channel (TC 1.A.1.10) family. Nav1.9/SCN11A subfamily. The voltage-resistant sodium channel consists of an ion conducting pore forming alpha-subunit regulated by one or more auxiliary subunits SCN1B, SCN2B and SCN3B. Expressed (at protein level) in myenteric sensory neurons. Expressed in small sensory neurons of the dorsal root ganglia (C-fiber neurons) and trigeminal ganglia.

It is found in the cell membrane. It carries out the reaction Na(+)(in) = Na(+)(out). Activity is not sensitive to inhibition by tetrodotoxin. In terms of biological role, sodium channel mediating the voltage-dependent sodium ion permeability of excitable membranes. Assuming opened or closed conformations in response to the voltage difference across the membrane, the protein forms a sodium-selective channel through which sodium ions may pass in accordance with their electrochemical gradient. Involved in membrane depolarization during action potential in nociceptors which function as key relay stations for the electrical transmission of pain signals from the periphery to the central nervous system. Also involved in rapid BDNF-evoked neuronal depolarization. The protein is Sodium channel protein type 11 subunit alpha of Rattus norvegicus (Rat).